A 422-amino-acid polypeptide reads, in one-letter code: Serine--tRNA ligase (422 aa).

226 to 228 (TSE) lines the L-serine pocket. ATP-binding positions include 257–259 (RRE) and valine 273. Glutamate 280 provides a ligand contact to L-serine. 344-347 (ELTS) lines the ATP pocket. Threonine 379 serves as a coordination point for L-serine.

The protein belongs to the class-II aminoacyl-tRNA synthetase family. Type-1 seryl-tRNA synthetase subfamily. As to quaternary structure, homodimer. The tRNA molecule binds across the dimer.

The protein resides in the cytoplasm. It carries out the reaction tRNA(Ser) + L-serine + ATP = L-seryl-tRNA(Ser) + AMP + diphosphate + H(+). It catalyses the reaction tRNA(Sec) + L-serine + ATP = L-seryl-tRNA(Sec) + AMP + diphosphate + H(+). It functions in the pathway aminoacyl-tRNA biosynthesis; selenocysteinyl-tRNA(Sec) biosynthesis; L-seryl-tRNA(Sec) from L-serine and tRNA(Sec): step 1/1. In terms of biological role, catalyzes the attachment of serine to tRNA(Ser). Is also able to aminoacylate tRNA(Sec) with serine, to form the misacylated tRNA L-seryl-tRNA(Sec), which will be further converted into selenocysteinyl-tRNA(Sec). This chain is Serine--tRNA ligase, found in Corynebacterium glutamicum (strain ATCC 13032 / DSM 20300 / JCM 1318 / BCRC 11384 / CCUG 27702 / LMG 3730 / NBRC 12168 / NCIMB 10025 / NRRL B-2784 / 534).